Reading from the N-terminus, the 581-residue chain is Probable bifunctional SAT/APS kinase 2 (581 aa).

The segment at 1–200 (MSGFVVWFTG…AAGGARGLIA (200 aa)) is adenylsulfate kinase. 10-17 (GLSGAGKS) contributes to the ATP binding site. S84 functions as the Phosphoserine intermediate in the catalytic mechanism. The interval 201–581 (PHGGELVNRW…ILIESMRSSS (381 aa)) is sulfate adenylyltransferase.

The protein in the N-terminal section; belongs to the APS kinase family. In the C-terminal section; belongs to the sulfate adenylyltransferase family.

The enzyme catalyses sulfate + ATP + H(+) = adenosine 5'-phosphosulfate + diphosphate. The catalysed reaction is adenosine 5'-phosphosulfate + ATP = 3'-phosphoadenylyl sulfate + ADP + H(+). The protein operates within sulfur metabolism; hydrogen sulfide biosynthesis; sulfite from sulfate: step 1/3. It participates in sulfur metabolism; hydrogen sulfide biosynthesis; sulfite from sulfate: step 2/3. This Sorangium cellulosum (strain So ce56) (Polyangium cellulosum (strain So ce56)) protein is Probable bifunctional SAT/APS kinase 2 (sat2/cysC2).